The chain runs to 550 residues: MFCVQCEQTIRTPAGNGCSYAQGMCGKTAETSDLQDLLIAALQGLSAWAVKAREYGIINHDVDSFAPRAFFSTLTNVNFDSPRIVGYAREAIALREALKAQCLAVDANARVDNPMADLQLVSDDLGELQRQAAEFTPNKDKAAIGENILGLRLLCLYGLKGAAAYMEHAHVLGQYDNDIYAQYHKIMAWLGTWPADMNALLECSMEIGQMNFKVMSILDAGETGKYGHPTPTQVNVKATAGKCILISGHDLKDLYNLLEQTEGTGVNVYTHGEMLPAHGYPELRKFKHLVGNYGSGWQNQQVEFARFPGPIVMTSNCIIDPTVGAYDDRIWTRSIVGWPGVRHLDGDDFSAVITQAQQMAGFPYSEIPHLITVGFGRQTLLGAADTLIDLVSREKLRHIFLLGGCDGARGERHYFTDFATSVPDDCLILTLACGKYRFNKLEFGDIEGLPRLVDAGQCNDAYSAIILAVTLAEKLGCGVNDLPLSLVLSWFEQKAIVILLTLLSLGVKNIVTGPTAPGFLTPDLLAVLNEKFGLRSITTVEEDMKQLLSA.

[2Fe-2S] cluster is bound by residues cysteine 3, cysteine 6, cysteine 18, and cysteine 25. Positions 249, 273, 317, 405, 433, 458, 492, and 494 each coordinate hybrid [4Fe-2O-2S] cluster. Residue cysteine 405 is modified to Cysteine persulfide.

The protein belongs to the HCP family. Requires [2Fe-2S] cluster as cofactor. The cofactor is hybrid [4Fe-2O-2S] cluster.

It is found in the cytoplasm. The enzyme catalyses A + NH4(+) + H2O = hydroxylamine + AH2 + H(+). Its activity is regulated as follows. Inhibited by oxygen. Activated by cyanide except in the prolonged presence of excess cyanide, where the enzyme is inactivated. In terms of biological role, catalyzes the reduction of hydroxylamine to form NH(3) and H(2)O. Is also able to reduce hydroxylamine analogs such as methylhydroxylamine and hydroxyquinone. Might have a role as a scavenger of potentially toxic by-products of nitrate metabolism. The polypeptide is Hydroxylamine reductase (Escherichia coli (strain K12)).